The chain runs to 258 residues: F-box/SPRY domain-containing protein 1 (258 aa).

The region spanning Thr-6–Gln-54 is the F-box domain. In terms of domain architecture, B30.2/SPRY spans Phe-64–Leu-256.

Belongs to the FBXO45/Fsn family. Component of an E3 ubiquitin ligase complex composed of hiw and Fsn.

It is found in the synapse. The protein operates within protein modification; protein ubiquitination. In terms of biological role, required in the presynaptic motoneuron to down-regulate the levels of wnd and restrain synaptic terminal growth at the neuromuscular junction (NMJ). The polypeptide is F-box/SPRY domain-containing protein 1 (Culex quinquefasciatus (Southern house mosquito)).